Consider the following 132-residue polypeptide: Probable prefoldin subunit 4 (132 aa).

The protein belongs to the prefoldin subunit beta family. In terms of assembly, heterohexamer of two PFD-alpha type and four PFD-beta type subunits.

Its function is as follows. Binds specifically to cytosolic chaperonin (c-CPN) and transfers target proteins to it. Binds to nascent polypeptide chain and promotes folding in an environment in which there are many competing pathways for nonnative proteins. This is Probable prefoldin subunit 4 (pfdn4) from Dictyostelium discoideum (Social amoeba).